Consider the following 567-residue polypeptide: Urease subunit alpha (567 aa).

The region spanning 129–567 is the Urease domain; sequence GGIDSHIHFI…LPMAQRYFLF (439 aa). Residues His134, His136, and Lys217 each contribute to the Ni(2+) site. Lys217 bears the N6-carboxylysine mark. His219 lines the substrate pocket. 2 residues coordinate Ni(2+): His246 and His272. Catalysis depends on His320, which acts as the Proton donor. Asp360 is a binding site for Ni(2+).

Belongs to the metallo-dependent hydrolases superfamily. Urease alpha subunit family. Heterotrimer of UreA (gamma), UreB (beta) and UreC (alpha) subunits. Three heterotrimers associate to form the active enzyme. Ni cation is required as a cofactor. Carboxylation allows a single lysine to coordinate two nickel ions.

Its subcellular location is the cytoplasm. It catalyses the reaction urea + 2 H2O + H(+) = hydrogencarbonate + 2 NH4(+). It participates in nitrogen metabolism; urea degradation; CO(2) and NH(3) from urea (urease route): step 1/1. In Alcanivorax borkumensis (strain ATCC 700651 / DSM 11573 / NCIMB 13689 / SK2), this protein is Urease subunit alpha.